Here is a 94-residue protein sequence, read N- to C-terminus: RNA-binding protein Hfq (94 aa).

The Sm domain occupies 9–68 (DPFLNALRRERVPVSIYLVNGIKLQGQVESFDQFVILLKNTVSQMVYKHAISTVVPARPF). The segment at 70–94 (VSAHHSSPAPTPAGGFNGQNDETSE) is disordered.

This sequence belongs to the Hfq family. As to quaternary structure, homohexamer.

Functionally, RNA chaperone that binds small regulatory RNA (sRNAs) and mRNAs to facilitate mRNA translational regulation in response to envelope stress, environmental stress and changes in metabolite concentrations. Also binds with high specificity to tRNAs. This Shewanella woodyi (strain ATCC 51908 / MS32) protein is RNA-binding protein Hfq.